The chain runs to 350 residues: Carbamoyl dehydratase HypE (350 aa).

Residue cysteine 350 is modified to S-carbamoylcysteine. Cysteine 350 is subject to S-cyanocysteine.

It belongs to the HypE family. Modified by HypF, which adds a carboxamido group to the thiolate of the C-terminal cysteine, yielding a protein-S-carboxamide. The carboxamido group is then dehydrated by HypE itself to yield a protein-thiocyanate.

The enzyme catalyses C-terminal S-carboxamide-L-cysteinyl-[HypE protein] + ATP = C-terminal S-cyanate-L-cysteinyl-[HypE protein] + ADP + phosphate + H(+). Its pathway is protein modification; [NiFe] hydrogenase maturation. Involved in the maturation of [NiFe] hydrogenases. Along with HypF, it catalyzes the synthesis of the CN ligands of the active site iron of [NiFe]-hydrogenases. HypE catalyzes the ATP-dependent dehydration of the carboxamido group attached to its C-terminal cysteine to a cyano group. This Rhizobium leguminosarum bv. viciae protein is Carbamoyl dehydratase HypE.